A 198-amino-acid chain; its full sequence is Glycerol-3-phosphate acyltransferase (198 aa).

A run of 5 helical transmembrane segments spans residues 2–22 (IIDL…FGVL), 53–73 (LGFI…VIAT), 79–99 (PFMY…SCFL), 113–133 (VLIP…TFFI), and 152–172 (IILF…IMAL).

It belongs to the PlsY family. As to quaternary structure, probably interacts with PlsX.

Its subcellular location is the cell membrane. The catalysed reaction is an acyl phosphate + sn-glycerol 3-phosphate = a 1-acyl-sn-glycero-3-phosphate + phosphate. The protein operates within lipid metabolism; phospholipid metabolism. Functionally, catalyzes the transfer of an acyl group from acyl-phosphate (acyl-PO(4)) to glycerol-3-phosphate (G3P) to form lysophosphatidic acid (LPA). This enzyme utilizes acyl-phosphate as fatty acyl donor, but not acyl-CoA or acyl-ACP. The sequence is that of Glycerol-3-phosphate acyltransferase from Lawsonia intracellularis (strain PHE/MN1-00).